An 843-amino-acid chain; its full sequence is Proto-oncogene vav (843 aa).

One can recognise a Calponin-homology (CH) domain in the interval 1 to 119 (MELWRQCTHW…YTLSALSWTP (119 aa)). The region spanning 194 to 373 (KRCCCLREIQ…RDLAQCVNEV (180 aa)) is the DH domain. Residues 402–504 (RPKIDGELKI…WMEQFEMAIS (103 aa)) enclose the PH domain. Residues 515-564 (GHDFQMFSFEETTSCKACQMLLRGTFYQGYRCYRCRAPAHKECLGRVPPC) form a Phorbol-ester/DAG-type zinc finger. The SH3 1 domain maps to 590-658 (LGLPKMEVCQ…PCNRVRPYVH (69 aa)). Residues 669–763 (WYAGPMERAG…SLDTTLQFPY (95 aa)) enclose the SH2 domain. In terms of domain architecture, SH3 2 spans 780-840 (KYFGTAKARY…PSNYVEEDYS (61 aa)). Phosphotyrosine is present on residues tyrosine 824 and tyrosine 842.

In terms of assembly, interacts with SHB. Interacts with APS, DOCK2, GRB2, GRB3, DOCK2, SLA, TEC and ZNF655/VIK. Interacts with SIAH2; without leading to its degradation. Associates with BLNK, PLCG1, GRB2 and NCK1 in a B-cell antigen receptor-dependent fashion. Interacts with CBLB; which inhibits tyrosine phosphorylation and down-regulates activity. May interact with CCPG1. Interacts with CLNK. Interacts with THEMIS2. Interacts with NEK3 and this interaction is prolactin-dependent. Interacts with ITK. Interacts with PTK2B/PYK2. Interacts with HCK. Interacts with PTK2B/PYK2. Interacts (via SH2 domain) with SYK. Interacts with ANKRD54. Interacts with CD6. Interacts with LCP2; this interaction plays a role in TCR-mediated cytokine production. In terms of processing, phosphorylated by FYN. Phosphorylated on tyrosine residues by HCK in response to IFNG and bacterial lipopolysaccharide (LPS).

Functionally, couples tyrosine kinase signals with the activation of the Rho/Rac GTPases, thus leading to cell differentiation and/or proliferation. The sequence is that of Proto-oncogene vav (Vav1) from Rattus norvegicus (Rat).